The sequence spans 246 residues: Uridylate kinase (246 aa).

20–23 (KISG) is a binding site for ATP. Residues 28-33 (GDQGYG) are involved in allosteric activation by GTP. Gly-62 is a UMP binding site. ATP-binding residues include Gly-63 and Arg-67. UMP is bound by residues Asp-82 and 143 to 150 (TGNPYFTT). ATP-binding residues include Thr-170, Tyr-176, and Asp-179.

Belongs to the UMP kinase family. In terms of assembly, homohexamer.

It localises to the cytoplasm. The catalysed reaction is UMP + ATP = UDP + ADP. It participates in pyrimidine metabolism; CTP biosynthesis via de novo pathway; UDP from UMP (UMPK route): step 1/1. Allosterically activated by GTP. Inhibited by UTP. In terms of biological role, catalyzes the reversible phosphorylation of UMP to UDP. The polypeptide is Uridylate kinase (Cereibacter sphaeroides (strain ATCC 17029 / ATH 2.4.9) (Rhodobacter sphaeroides)).